Consider the following 165-residue polypeptide: MSSTFSFDVVSKLDMQEFDNALNQAKKELQQRYDLKNTNSSIEFNQKDMQLTLESADEFSLKSVVDIIESKMIKRGISIKSLDFGKVEPASQKSVRQKISLKEGIDKENAKKITNAVKDMKLKVQASVQGEEVRISGKSKDELQTVMSALKEMDLPVPLQFTNYR.

This sequence belongs to the YajQ family.

Functionally, nucleotide-binding protein. The polypeptide is Nucleotide-binding protein Ctha_0558 (Chloroherpeton thalassium (strain ATCC 35110 / GB-78)).